The following is a 496-amino-acid chain: NADP-dependent glyceraldehyde-3-phosphate dehydrogenase (496 aa).

The residue at position 2 (Ala2) is an N-acetylalanine. Thr4 carries the post-translational modification Phosphothreonine. Substrate contacts are provided by residues Arg116 and 169–170; that span reads NY. NADP(+)-binding residues include Lys192, Thr195, and Asp230. NAD(+) is bound at residue 245 to 249; it reads GGDTG. Glu264 functions as the Proton acceptor in the catalytic mechanism. A substrate-binding site is contributed by 297–299; sequence RCT. Cys298 acts as the Nucleophile in catalysis. Glu391 lines the NADP(+) pocket. Arg451 provides a ligand contact to substrate.

This sequence belongs to the aldehyde dehydrogenase family.

It is found in the cytoplasm. It catalyses the reaction D-glyceraldehyde 3-phosphate + NADP(+) + H2O = (2R)-3-phosphoglycerate + NADPH + 2 H(+). Important as a means of generating NADPH for biosynthetic reactions. The sequence is that of NADP-dependent glyceraldehyde-3-phosphate dehydrogenase (ALDH11A3) from Arabidopsis thaliana (Mouse-ear cress).